The primary structure comprises 480 residues: Zinc finger protein ztf-16 (480 aa).

A C2H2-type 1 zinc finger spans residues 5–27; that stretch reads NACTECGFTTTVFSEFQGHIEKH. The disordered stretch occupies residues 25-75; that stretch reads EKHENEHSRSSSGEMSNSQTIEWGDGIQSSTPSPRSTPPSDPTPSPDSDEH. A compositionally biased stretch (polar residues) spans 34-45; sequence SSSGEMSNSQTI. A compositionally biased stretch (pro residues) spans 59–69; it reads RSTPPSDPTPS. 5 consecutive C2H2-type zinc fingers follow at residues 103–125, 133–155, 161–183, 190–215, and 223–246; these read HVCP…LEAH, YQCD…RMRH, YECR…SMTH, FDCP…EETH, and ASCK…QTRH. Disordered regions lie at residues 243–275, 290–311, and 376–417; these read QTRH…MDPA, EFSP…DKIP, and TSSS…KEDE. The span at 244–259 shows a compositional bias: basic and acidic residues; that stretch reads TRHDDSESSPKKENTP. 2 stretches are compositionally biased toward low complexity: residues 292 to 305 and 376 to 403; these read SPPN…STSS and TSSS…SLSL. Positions 404 to 413 are enriched in basic and acidic residues; the sequence is TEKEKSPTPE. 2 consecutive C2H2-type zinc fingers follow at residues 420-442 and 448-472; these read VECC…KSLH and FKCA…FADH.

The protein belongs to the Ikaros C2H2-type zinc-finger protein family. As to expression, expressed in the somatic gonad, hypodermis and cells in the head and tail. Expressed in amphid and phasmid sheath glia, amphid and phasmid socket glia, and in neurons in the head.

Its subcellular location is the nucleus. Its function is as follows. Positively regulates the expression of ver-1 in the amphid sheath glia of amphid sensory neurons. Together with ehn-3, plays a role in somatic gonad development and is required for proper gonadal primordium assembly and somatic gonad precursor cell morphology. The protein is Zinc finger protein ztf-16 of Caenorhabditis elegans.